A 496-amino-acid chain; its full sequence is Cytochrome P450 4ae1 (496 aa).

A heme-binding site is contributed by Cys-443.

The protein belongs to the cytochrome P450 family. The cofactor is heme.

The protein localises to the endoplasmic reticulum membrane. It is found in the microsome membrane. Functionally, may be involved in the metabolism of insect hormones and in the breakdown of synthetic insecticides. The protein is Cytochrome P450 4ae1 (Cyp4ae1) of Drosophila melanogaster (Fruit fly).